The primary structure comprises 576 residues: Zn(2)-C6 fungal-type transcription factor mpsE (576 aa).

Residues 15 to 46 (CDRCRSHKLKCPQQPSTATGACQRCTRAKAQC) constitute a DNA-binding region (zn(2)-C6 fungal-type). Over residues 47–61 (TFSPRSRAIKNTQDG) the composition is skewed to polar residues. Disordered stretches follow at residues 47–123 (TFSP…GTFD), 334–369 (VAHAGHPPPPHLSHHRHCQPSPPGSLPTPTSRSSTA), and 404–424 (HPAPSHSSARHRHSRSTLHRR). Over residues 95–109 (PPQQQQSDQQKPSGS) the composition is skewed to low complexity.

Its subcellular location is the nucleus. Functionally, transcription factor; part of the gene cluster that mediates the biosynthesis of macrophasetins, 3-decalinoyltetramic acids (DTAs) which feature a tetramate (pyrrolidine-2,4-dione) unit connected to a decalin fragment and that have potent bioactivities. This Macrophomina phaseolina (strain MS6) (Charcoal rot fungus) protein is Zn(2)-C6 fungal-type transcription factor mpsE.